A 247-amino-acid chain; its full sequence is ATP synthase subunit a, chloroplastic (247 aa).

A run of 5 helical transmembrane segments spans residues 38-58, 95-115, 134-154, 199-219, and 220-240; these read QVLI…AIAV, VPFI…GALL, INTT…AGLT, LVVV…VMFL, and GLFT…AYIG.

It belongs to the ATPase A chain family. In terms of assembly, F-type ATPases have 2 components, CF(1) - the catalytic core - and CF(0) - the membrane proton channel. CF(1) has five subunits: alpha(3), beta(3), gamma(1), delta(1), epsilon(1). CF(0) has four main subunits: a, b, b' and c.

It is found in the plastid. The protein localises to the chloroplast thylakoid membrane. Its function is as follows. Key component of the proton channel; it plays a direct role in the translocation of protons across the membrane. The polypeptide is ATP synthase subunit a, chloroplastic (Calycanthus floridus var. glaucus (Eastern sweetshrub)).